We begin with the raw amino-acid sequence, 1976 residues long: MEEESTSEILDGEIVGITFALASHHEICIQSISESAINHPSQLTNAFLGLPLEFGKCESCGATEPDKCEGHFGYIQLPVPIYHPAHVNELKQMLSLLCLKCLKIKKAKGTSGGLADRLLGVCCEEASQISIKDRASDGASYLELKLPSRSRLQPGCWNFLERYGYRYGSDYTRPLLAREVKEILRRIPEESRKKLTAKGHIPQEGYILEYLPVPPNCLSVPEASDGFSTMSVDPSRIELKDVLKKVIAIKSSRSGETNFESHKAEASEMFRVVDTYLQVRGTAKAARNIDMRYGVSKISDSSSSKAWTEKMRTLFIRKGSGFSSRSVITGDAYRHVNEVGIPIEIAQRITFEERVSVHNRGYLQKLVDDKLCLSYTQGSTTYSLRDGSKGHTELKPGQVVHRRVMDGDVVFINRPPTTHKHSLQALRVYVHEDNTVKINPLMCSPLSADFDGDCVHLFYPQSLSAKAEVMELFSVEKQLLSSHTGQLILQMGSDSLLSLRVMLERVFLDKATAQQLAMYGSLSLPPPALRKSSKSGPAWTVFQILQLAFPERLSCKGDRFLVDGSDLLKFDFGVDAMGSIINEIVTSIFLEKGPKETLGFFDSLQPLLMESLFAEGFSLSLEDLSMSRADMDVIHNLIIREISPMVSRLRLSYRDELQLENSIHKVKEVAANFMLKSYSIRNLIDIKSNSAITKLVQQTGFLGLQLSDKKKFYTKTLVEDMAIFCKRKYGRISSSGDFGIVKGCFFHGLDPYEEMAHSIAAREVIVRSSRGLAEPGTLFKNLMAVLRDIVITNDGTVRNTCSNSVIQFKYGVDSERGHQGLFEAGEPVGVLAATAMSNPAYKAVLDSSPNSNSSWELMKEVLLCKVNFQNTTNDRRVILYLNECHCGKRFCQENAACTVRNKLNKVSLKDTAVEFLVEYRKQPTISEIFGIDSCLHGHIHLNKTLLQDWNISMQDIHQKCEDVINSLGQKKKKKATDDFKRTSLSVSECCSFRDPCGSKGSDMPCLTFSYNATDPDLERTLDVLCNTVYPVLLEIVIKGDSRICSANIIWNSSDMTTWIRNRHASRRGEWVLDVTVEKSAVKQSGDAWRVVIDSCLSVLHLIDTKRSIPYSVKQVQELLGLSCAFEQAVQRLSASVRMVSKGVLKEHIILLANNMTCSGTMLGFNSGGYKALTRSLNIKAPFTEATLIAPRKCFEKAAEKCHTDSLSTVVGSCSWGKRVDVGTGSQFELLWNQKETGLDDKEETDVYSFLQMVISTTNADAFVSSPGFDVTEEEMAEWAESPERDSALGEPKFEDSADFQNLHDEGKPSGANWEKSSSWDNGCSGGSEWGVSKSTGGEANPESNWEKTTNVEKEDAWSSWNTRKDAQESSKSDSGGAWGIKTKDADADTTPNWETSPAPKDSIVPENNEPTSDVWGHKSVSDKSWDKKNWGTESAPAAWGSTDAAVWGSSDKKNSETESDAAAWGSRDKNNSDVGSGAGVLGPWNKKSSETESNGATWGSSDKTKSGAAAWNSWDKKNIETDSEPAAWGSQGKKNSETESGPAAWGAWDKKKSETEPGPAGWGMGDKKNSETELGPAAMGNWDKKKSDTKSGPAAWGSTDAAAWGSSDKNNSETESDAAAWGSRNKKTSEIESGAGAWGSWGQPSPTAEDKDTNEDDRNPWVSLKETKSREKDDKERSQWGNPAKKFPSSGGWSNGGGADWKGNRNHTPRPPRSEDNLAPMFTATRQRLDSFTSEEQELLSDVEPVMRTLRKIMHPSAYPDGDPISDDDKTFVLEKILNFHPQKETKLGSGVDFITVDKHTIFSDSRCFFVVSTDGAKQDFSYRKSLNNYLMKKYPDRAEEFIDKYFTKPRPSGNRDRNNQDATPPGEEQSQPPNQSIGNGGDDFQTQTQSQSPSQTRAQSPSQAQAQSPSQTQSQSQSQSQSQSQSQSQSQSQSQSQSQSQSQSQSPSQTQTQSPSQTQAQAQSPSSQSPSQTQT.

6 residues coordinate Zn(2+): C57, C60, C68, H71, C98, and C101. Positions 449, 451, and 453 each coordinate Mg(2+). Positions 751–763 (PYEEMAHSIAARE) are bridging helix. Residues 1215–1216 (WG) form repeat 1. An 18 X 2 AA repeats of [WG]-[GW] repeats region spans residues 1215–1693 (WGKRVDVGTG…AKKFPSSGGW (479 aa)). Disordered stretches follow at residues 1272-1291 (EEEMAEWAESPERDSALGEP), 1298-1718 (DFQN…EDNL), and 1847-1976 (FTKP…QTQT). Composition is skewed to basic and acidic residues over residues 1281–1291 (SPERDSALGEP) and 1298–1307 (DFQNLHDEGK). Residues 1329 to 1330 (WG) form repeat 2. Positions 1332–1348 (SKSTGGEANPESNWEKT) are enriched in polar residues. Residues 1349 to 1371 (TNVEKEDAWSSWNTRKDAQESSK) are compositionally biased toward basic and acidic residues. A run of 15 repeats spans residues 1378-1379 (WG), 1415-1416 (WG), 1430-1431 (WG), 1439-1440 (WG), 1447-1448 (WG), 1464-1465 (WG), 1498-1499 (WG), 1528-1529 (WG), 1545-1546 (WG), 1562-1563 (WG), 1596-1597 (WG), 1604-1605 (WG), 1621-1622 (WG), 1638-1639 (WG), and 1641-1642 (WG). Over residues 1415 to 1430 (WGHKSVSDKSWDKKNW) the composition is skewed to basic and acidic residues. The segment covering 1491–1501 (TESNGATWGSS) has biased composition (polar residues). The span at 1648 to 1678 (AEDKDTNEDDRNPWVSLKETKSREKDDKERS) shows a compositional bias: basic and acidic residues. 2 consecutive repeat copies span residues 1680-1681 (WG) and 1692-1693 (GW). The segment covering 1869 to 1878 (EQSQPPNQSI) has biased composition (polar residues). Residues 1886–1976 (QTQTQSQSPS…SSQSPSQTQT (91 aa)) show a composition bias toward low complexity.

Belongs to the RNA polymerase beta' chain family. As to quaternary structure, component of the RNA polymerase V complex. Interacts with NRPD4, NRPD2A, and (via C-terminus) with AGO4. Interacts with SUVH2. Mostly expressed in flowers, and, to a lower extent, in leaves. Present in sperm cells.

Its subcellular location is the nucleus. The protein resides in the nucleolus. It catalyses the reaction RNA(n) + a ribonucleoside 5'-triphosphate = RNA(n+1) + diphosphate. DNA-dependent RNA polymerase catalyzes the transcription of DNA into RNA using the four ribonucleoside triphosphates as substrates. Largest and catalytic component of RNA polymerase V involved in RNA-directed DNA methylation-dependent (RdDM) silencing of endogenous repeated sequences, including transposable elements. Also required for full erasure of methylation when the RNA trigger is withdrawn. Seems also involved in the synthesis of short-interfering RNAs (siRNA). Essential component of a self-reinforcing loop coupling de novo DNA methylation to siRNA production. Involved in the maintenance of post-transcriptional RNA silencing. This chain is DNA-directed RNA polymerase V subunit 1 (NRPE1), found in Arabidopsis thaliana (Mouse-ear cress).